A 227-amino-acid polypeptide reads, in one-letter code: ATP-dependent dethiobiotin synthetase BioD (227 aa).

ATP is bound at residue 13–18 (DIGKTY). A Mg(2+)-binding site is contributed by threonine 17. The active site involves lysine 38. Residue serine 42 participates in substrate binding. Residues aspartate 55, 116-119 (EGSG), and 179-180 (NN) each bind ATP. 2 residues coordinate Mg(2+): aspartate 55 and glutamate 116.

This sequence belongs to the dethiobiotin synthetase family. In terms of assembly, homodimer. Mg(2+) is required as a cofactor.

The protein resides in the cytoplasm. The enzyme catalyses (7R,8S)-7,8-diammoniononanoate + CO2 + ATP = (4R,5S)-dethiobiotin + ADP + phosphate + 3 H(+). The protein operates within cofactor biosynthesis; biotin biosynthesis; biotin from 7,8-diaminononanoate: step 1/2. Functionally, catalyzes a mechanistically unusual reaction, the ATP-dependent insertion of CO2 between the N7 and N8 nitrogen atoms of 7,8-diaminopelargonic acid (DAPA, also called 7,8-diammoniononanoate) to form a ureido ring. The protein is ATP-dependent dethiobiotin synthetase BioD of Clostridium botulinum (strain Langeland / NCTC 10281 / Type F).